A 90-amino-acid polypeptide reads, in one-letter code: Arminin 7722 (90 aa).

Positions 1–18 (MRSASLILFVAIVALTYA) are cleaved as a signal peptide. Positions 19–59 (RSYEDIKEEIRNEVENEILDDLEEENDELDDNAQEVSDPRA) are excised as a propeptide. The residue at position 87 (T87) is a Threonine amide.

The protein belongs to the arminin family. Expressed in entodermal epithelium along the body column.

It is found in the secreted. Its subcellular location is the target cell membrane. In terms of biological role, antimicrobial peptide with a broad-spectrum antimicrobial activity. Keeps its antibacterial activity under a wide range of salt concentrations that mimic physiological conditions of human blood, which is surprising, since Hydra is an obligate freshwater animal with nearly no salt tolerance. Does not affect red blood cells. This chain is Arminin 7722, found in Hydra vulgaris (Hydra).